The primary structure comprises 258 residues: Sugar fermentation stimulation protein homolog (258 aa).

The protein belongs to the SfsA family.

In Prochlorococcus marinus (strain NATL2A), this protein is Sugar fermentation stimulation protein homolog.